The primary structure comprises 364 residues: FMNH(2)-dependent dimethylsulfone monooxygenase (364 aa).

This sequence belongs to the SsuD family.

The enzyme catalyses dimethyl sulfone + FMNH2 + O2 = methanesulfinate + FMN + formaldehyde + H2O + 2 H(+). In terms of biological role, involved in the dimethyl sulfide degradation pathway. Catalyzes the oxidation of dimethylsulfone (DMSO2) to yield methanesulfinate, which is oxidized spontaneously to methanesulfonate in the presence of dioxygen and FMNH(2). The protein is FMNH(2)-dependent dimethylsulfone monooxygenase of Pseudomonas fluorescens (strain Pf0-1).